The primary structure comprises 66 residues: Large ribosomal subunit protein bL35 (66 aa).

Positions 1 to 16 are enriched in basic residues; that stretch reads MPKQKTHRASAKRFKR. A disordered region spans residues 1-20; the sequence is MPKQKTHRASAKRFKRTGSG.

It belongs to the bacterial ribosomal protein bL35 family.

This is Large ribosomal subunit protein bL35 from Streptococcus uberis (strain ATCC BAA-854 / 0140J).